A 469-amino-acid polypeptide reads, in one-letter code: Bifunctional protein GlmU (469 aa).

Positions 1 to 237 (MTTNRKFAIA…SHEVLGVNTR (237 aa)) are pyrophosphorylase. UDP-N-acetyl-alpha-D-glucosamine-binding positions include 12-15 (LAAG), lysine 26, glutamine 78, 83-84 (GT), 105-107 (SGD), glycine 144, glutamate 162, asparagine 177, and asparagine 235. Aspartate 107 is a Mg(2+) binding site. Asparagine 235 contacts Mg(2+). Residues 238 to 258 (QDLASLDAHLRLQKCQQLMSA) are linker. Residues 259-469 (GVSIFKPETC…KKRAEQKKKK (211 aa)) are N-acetyltransferase. The UDP-N-acetyl-alpha-D-glucosamine site is built by arginine 341 and lysine 359. The active-site Proton acceptor is histidine 371. Positions 374 and 385 each coordinate UDP-N-acetyl-alpha-D-glucosamine. Residues alanine 388, 394-395 (NY), serine 413, alanine 431, and arginine 448 contribute to the acetyl-CoA site.

The protein in the N-terminal section; belongs to the N-acetylglucosamine-1-phosphate uridyltransferase family. In the C-terminal section; belongs to the transferase hexapeptide repeat family. As to quaternary structure, homotrimer. It depends on Mg(2+) as a cofactor.

It is found in the cytoplasm. The catalysed reaction is alpha-D-glucosamine 1-phosphate + acetyl-CoA = N-acetyl-alpha-D-glucosamine 1-phosphate + CoA + H(+). The enzyme catalyses N-acetyl-alpha-D-glucosamine 1-phosphate + UTP + H(+) = UDP-N-acetyl-alpha-D-glucosamine + diphosphate. It participates in nucleotide-sugar biosynthesis; UDP-N-acetyl-alpha-D-glucosamine biosynthesis; N-acetyl-alpha-D-glucosamine 1-phosphate from alpha-D-glucosamine 6-phosphate (route II): step 2/2. The protein operates within nucleotide-sugar biosynthesis; UDP-N-acetyl-alpha-D-glucosamine biosynthesis; UDP-N-acetyl-alpha-D-glucosamine from N-acetyl-alpha-D-glucosamine 1-phosphate: step 1/1. Its pathway is bacterial outer membrane biogenesis; LPS lipid A biosynthesis. Functionally, catalyzes the last two sequential reactions in the de novo biosynthetic pathway for UDP-N-acetylglucosamine (UDP-GlcNAc). The C-terminal domain catalyzes the transfer of acetyl group from acetyl coenzyme A to glucosamine-1-phosphate (GlcN-1-P) to produce N-acetylglucosamine-1-phosphate (GlcNAc-1-P), which is converted into UDP-GlcNAc by the transfer of uridine 5-monophosphate (from uridine 5-triphosphate), a reaction catalyzed by the N-terminal domain. This Koribacter versatilis (strain Ellin345) protein is Bifunctional protein GlmU.